Here is a 71-residue protein sequence, read N- to C-terminus: Large ribosomal subunit protein bL31 (71 aa).

Zn(2+) is bound by residues cysteine 16, cysteine 18, cysteine 37, and cysteine 40.

The protein belongs to the bacterial ribosomal protein bL31 family. Type A subfamily. In terms of assembly, part of the 50S ribosomal subunit. The cofactor is Zn(2+).

In terms of biological role, binds the 23S rRNA. The sequence is that of Large ribosomal subunit protein bL31 from Aeromonas salmonicida (strain A449).